Here is a 62-residue protein sequence, read N- to C-terminus: Sperm protamine P1 (62 aa).

The tract at residues 1 to 62 (MARSRRHSRS…RCSRRRRRRC (62 aa)) is disordered.

Belongs to the protamine P1 family. As to expression, testis.

The protein resides in the nucleus. Its subcellular location is the chromosome. Its function is as follows. Protamines substitute for histones in the chromatin of sperm during the haploid phase of spermatogenesis. They compact sperm DNA into a highly condensed, stable and inactive complex. The sequence is that of Sperm protamine P1 (PRM1) from Planigale ingrami (Long-tailed planigale).